The sequence spans 453 residues: MSIPGFGAEAQVYSETGSKGLVEVAIPEGSEWRIEVPHKTILKFKVTEGVAEIFGTELPINVELQISGTKTMVYAPIIYETFKNKTVMSNESEEIVEYLSNDSVMANYINLHLVVEAMRQQVSDNNILNPTELQSGPRVLIVGNGNSGKTSLAKLLSAYAIKSDSTPVLVNLNPRDGVFSLPGSLTATPISDSLDVESANGWGFTTTSGSLFHNPKQPIVKNYGFVDVNENLDLYKYQVSKLGVTVLSRLEEDIACRNGGVIIDTPALGIKDFTVIENIVSDFEVNLIVVLGNERLMIDLKKRFKHKSALQIVKVPKSEGLVEVDEAFIRRTQEESIKEYFNGNYKTRLSPFKTDIDVNDHTIYKCVLSSDVNSALSFLPAEPSSSNLDNSILAITQLPSTHKSGRELLNTSILGYVHVSKFDDAKGKIKVLLPFPGGFPRNMLISTNIGFNE.

ATP-binding positions include Glu31, Lys70, and 146–151 (NSGKTS).

The protein belongs to the Clp1 family. Clp1 subfamily. Component of a pre-mRNA cleavage factor complex. Interacts directly with PCF11.

It localises to the nucleus. Required for endonucleolytic cleavage during polyadenylation-dependent pre-mRNA 3'-end formation. This is mRNA cleavage and polyadenylation factor CLP1 from Scheffersomyces stipitis (strain ATCC 58785 / CBS 6054 / NBRC 10063 / NRRL Y-11545) (Yeast).